A 320-amino-acid polypeptide reads, in one-letter code: Cytochrome c biogenesis protein CcsA (320 aa).

8 consecutive transmembrane segments (helical) span residues 15 to 35 (FSIVSIVITIHLITLLVDEII), 43 to 63 (KGMIAIFLCITGLLVTRWIYS), 71 to 91 (LYESLIFLSWSLSVIHIVPYF), 98 to 118 (LSTITASSVIFTQGFATSGLL), 143 to 163 (MILSYAALLCGSLLSVALLVI), 224 to 244 (VISLGFIFLTIGILSGAVWAN), 251 to 271 (WNWDPKETWAFITWIVFAIYL), and 285 to 305 (AIVASIGFLIIWICYFGVNLL).

This sequence belongs to the CcmF/CycK/Ccl1/NrfE/CcsA family. As to quaternary structure, may interact with Ccs1.

It localises to the plastid. Its subcellular location is the chloroplast thylakoid membrane. Functionally, required during biogenesis of c-type cytochromes (cytochrome c6 and cytochrome f) at the step of heme attachment. The chain is Cytochrome c biogenesis protein CcsA from Panax ginseng (Korean ginseng).